The following is a 251-amino-acid chain: Aliphatic sulfonates import ATP-binding protein SsuB (251 aa).

Positions V3–Q231 constitute an ABC transporter domain. G39–S46 lines the ATP pocket.

Belongs to the ABC transporter superfamily. Aliphatic sulfonates importer (TC 3.A.1.17.2) family. In terms of assembly, the complex is composed of two ATP-binding proteins (SsuB), two transmembrane proteins (SsuC) and a solute-binding protein (SsuA).

It is found in the cell membrane. It catalyses the reaction ATP + H2O + aliphatic sulfonate-[sulfonate-binding protein]Side 1 = ADP + phosphate + aliphatic sulfonateSide 2 + [sulfonate-binding protein]Side 1.. Its function is as follows. Part of the ABC transporter complex SsuABC involved in aliphatic sulfonates import. Responsible for energy coupling to the transport system. In Bacillus cereus (strain ZK / E33L), this protein is Aliphatic sulfonates import ATP-binding protein SsuB.